Reading from the N-terminus, the 331-residue chain is Putative T-box protein 36 (331 aa).

A DNA-binding region (T-box) is located at residues 29-210 (EITKKQWNQL…MNRFSRKRKY (182 aa)).

The protein localises to the nucleus. The chain is Putative T-box protein 36 (tbx-36) from Caenorhabditis elegans.